We begin with the raw amino-acid sequence, 111 residues long: WAP four-disulfide core domain protein 12 (111 aa).

The first 23 residues, 1–23 (MGSSSFLVLMVSLALVTLVVVEG), serve as a signal peptide directing secretion. One can recognise a WAP domain in the interval 27–74 (GIEKAGVCPADNVRCFKSNPPQCHTDQDCLGERKCCYLHCGFKCVIPV). Intrachain disulfides connect cysteine 34–cysteine 62, cysteine 41–cysteine 66, cysteine 49–cysteine 61, and cysteine 55–cysteine 70. The interval 80-111 (GGNKDEDVSGPHPEPGWEAKSPGSSSTGCPQI) is disordered. The segment covering 101–111 (PGSSSTGCPQI) has biased composition (polar residues).

Its subcellular location is the secreted. Functionally, antibacterial protein. Putative acid-stable proteinase inhibitor. The chain is WAP four-disulfide core domain protein 12 (WFDC12) from Colobus guereza (Mantled guereza).